The chain runs to 256 residues: 5-oxoprolinase subunit A (256 aa).

Belongs to the LamB/PxpA family. In terms of assembly, forms a complex composed of PxpA, PxpB and PxpC.

The enzyme catalyses 5-oxo-L-proline + ATP + 2 H2O = L-glutamate + ADP + phosphate + H(+). Functionally, catalyzes the cleavage of 5-oxoproline to form L-glutamate coupled to the hydrolysis of ATP to ADP and inorganic phosphate. This Geobacillus thermodenitrificans (strain NG80-2) protein is 5-oxoprolinase subunit A.